The chain runs to 192 residues: UPF0149 protein YgfB (192 aa).

The protein belongs to the UPF0149 family.

The protein is UPF0149 protein YgfB of Escherichia coli O127:H6 (strain E2348/69 / EPEC).